The sequence spans 336 residues: Holliday junction branch migration complex subunit RuvB (336 aa).

The segment at 4–184 (ADRLISAGTT…FGIVQRLEFY (181 aa)) is large ATPase domain (RuvB-L). ATP-binding positions include isoleucine 23, arginine 24, glycine 65, lysine 68, threonine 69, threonine 70, 131 to 133 (EDY), arginine 174, tyrosine 184, and arginine 221. Residue threonine 69 coordinates Mg(2+). The small ATPAse domain (RuvB-S) stretch occupies residues 185–255 (QVPDLQYIVS…IAAQALDMLN (71 aa)). The tract at residues 258 to 336 (AEGFDYMDRK…HFGITPPEMP (79 aa)) is head domain (RuvB-H). Residues arginine 294, arginine 313, and arginine 318 each contribute to the DNA site.

It belongs to the RuvB family. As to quaternary structure, homohexamer. Forms an RuvA(8)-RuvB(12)-Holliday junction (HJ) complex. HJ DNA is sandwiched between 2 RuvA tetramers; dsDNA enters through RuvA and exits via RuvB. An RuvB hexamer assembles on each DNA strand where it exits the tetramer. Each RuvB hexamer is contacted by two RuvA subunits (via domain III) on 2 adjacent RuvB subunits; this complex drives branch migration. In the full resolvosome a probable DNA-RuvA(4)-RuvB(12)-RuvC(2) complex forms which resolves the HJ.

It is found in the cytoplasm. The catalysed reaction is ATP + H2O = ADP + phosphate + H(+). Its function is as follows. The RuvA-RuvB-RuvC complex processes Holliday junction (HJ) DNA during genetic recombination and DNA repair, while the RuvA-RuvB complex plays an important role in the rescue of blocked DNA replication forks via replication fork reversal (RFR). RuvA specifically binds to HJ cruciform DNA, conferring on it an open structure. The RuvB hexamer acts as an ATP-dependent pump, pulling dsDNA into and through the RuvAB complex. RuvB forms 2 homohexamers on either side of HJ DNA bound by 1 or 2 RuvA tetramers; 4 subunits per hexamer contact DNA at a time. Coordinated motions by a converter formed by DNA-disengaged RuvB subunits stimulates ATP hydrolysis and nucleotide exchange. Immobilization of the converter enables RuvB to convert the ATP-contained energy into a lever motion, pulling 2 nucleotides of DNA out of the RuvA tetramer per ATP hydrolyzed, thus driving DNA branch migration. The RuvB motors rotate together with the DNA substrate, which together with the progressing nucleotide cycle form the mechanistic basis for DNA recombination by continuous HJ branch migration. Branch migration allows RuvC to scan DNA until it finds its consensus sequence, where it cleaves and resolves cruciform DNA. This is Holliday junction branch migration complex subunit RuvB from Shigella boydii serotype 18 (strain CDC 3083-94 / BS512).